The following is an 884-amino-acid chain: Protein translocase subunit SecA (884 aa).

ATP is bound by residues glutamine 83, glycine 101 to threonine 105, and aspartate 491.

The protein belongs to the SecA family.

Its subcellular location is the plastid. It is found in the chloroplast stroma. The protein localises to the chloroplast thylakoid membrane. It catalyses the reaction ATP + H2O + cellular proteinSide 1 = ADP + phosphate + cellular proteinSide 2.. Has a central role in coupling the hydrolysis of ATP to the transfer of proteins across the thylakoid membrane. The chain is Protein translocase subunit SecA from Porphyra purpurea (Red seaweed).